The following is a 388-amino-acid chain: uncharacterized protein (388 aa).

Transmembrane regions (helical) follow at residues 18–38, 42–62, 89–111, 116–136, 145–165, 171–191, 219–239, 248–268, 287–307, 341–361, and 365–385; these read AAMFLNYLTIGIPLVMLPLYV, LHLSDLLIGIAVGSQFIATLL, ASGLLMLVSLIAHPVPLLAWAIL, VLLGIGESFILTGNLTWGMWL, VISWNGMATYGALAIGAPLGL, AGLALPALLVVLLPIIASGVI, TGLVLQGIGFATLSAFTALWF, GFAMTLFGIAFIAVRFFCAKF, TGLAVMWAAPSAGAALIGAAI, AFQDLAYGFTGPIAGLLTPFI, and QVFLLAAACALLGAAVVHLLL.

The protein belongs to the major facilitator superfamily. YfcJ family.

The protein resides in the cell inner membrane. This is an uncharacterized protein from Salmonella typhimurium (strain LT2 / SGSC1412 / ATCC 700720).